The chain runs to 140 residues: Ribonuclease P protein subunit p20 (140 aa).

Belongs to the histone-like Alba family. Component of nuclear RNase P and RNase MRP complexes. RNase P consists of a catalytic RNA moiety and 10 different protein chains; POP1, POP4, POP5, POP7, RPP14, RPP21, RPP25, RPP30, RPP38 and RPP40. Within the RNase P complex, POP1, POP7 and RPP25 form the 'finger' subcomplex, POP5, RPP14, RPP40 and homodimeric RPP30 form the 'palm' subcomplex, and RPP21, POP4 and RPP38 form the 'wrist' subcomplex. All subunits of the RNase P complex interact with the catalytic RNA. Several subunits of RNase P are also part of the RNase MRP complex. RNase MRP consists of a catalytic RNA moiety and about 8 protein subunits; POP1, POP7, RPP25, RPP30, RPP38, RPP40 and possibly also POP4 and POP5. Interacts with SMN1. POP7 forms a heterodimer with RPP25 that binds to the P3 stem loop of the catalytic RNA.

It localises to the nucleus. The protein localises to the nucleolus. The protein resides in the cytoplasm. Its subcellular location is the cytoplasmic granule. In terms of biological role, component of ribonuclease P, a ribonucleoprotein complex that generates mature tRNA molecules by cleaving their 5'-ends. Also a component of the MRP ribonuclease complex, which cleaves pre-rRNA sequences. In Mus musculus (Mouse), this protein is Ribonuclease P protein subunit p20 (Pop7).